A 250-amino-acid chain; its full sequence is Iron-sulfur assembly protein 1 (250 aa).

The disordered stretch occupies residues 54-89 (AADSVSPDSQRPGKKPFKFIVSNQSKSSKASKSPKW). Residues 75–89 (SNQSKSSKASKSPKW) show a composition bias toward low complexity. Positions 178, 242, and 244 each coordinate Fe cation.

This sequence belongs to the HesB/IscA family.

The protein localises to the mitochondrion matrix. Functionally, involved in the assembly of mitochondrial and cytoplasmic iron-sulfur proteins. Probably involved in the binding of an intermediate of Fe/S cluster assembly. This Saccharomyces cerevisiae (strain ATCC 204508 / S288c) (Baker's yeast) protein is Iron-sulfur assembly protein 1 (ISA1).